Here is a 169-residue protein sequence, read N- to C-terminus: MILGLALIPSKSFQEAVDSYRKRYDKQYSRIKPHVTIKAPFEIEDGDLDSVIEQVRARINGIPAVEVHATKASSFKPTNNVIYFKVAKTDDLEELFNRFNGEDFYGEAEHVFVPHFTIAQGLSSQEFEDIFGQVALAGVDHKEIIDELTLLRFDDDEDKWKVIETFKLA.

The active-site Proton donor is His34. 2 consecutive short sequence motifs (HXTX) follow at residues 34 to 37 and 115 to 118; these read HVTI and HFTI. The Proton acceptor role is filled by His115.

Belongs to the 2H phosphoesterase superfamily. YjcG family.

This is Putative phosphoesterase SAR0985 from Staphylococcus aureus (strain MRSA252).